The sequence spans 258 residues: MKNNYTSLKSPLDEEDELKTDHEIDLEKGLLPEYNSEEEGALPPYSDISKLANPVPEDSSTGPTEIANPNVERRQEFKDSHPNIYFLLRLLISVLAVSVVFFTAWVCVNPLEKSIFGKVAFSVTIGITCPILFIAIFYFYETWTKACGKGIKHFLKKWRNMFFTFCKSPIFCLVLLKAENKLSSHLGDQQWGWKCSASAFTFMAVSSILIFIAETVEPGSCSTDLVKRVQAYCDYEARQYASSNTAIPLREMNPENEA.

The interval 1–71 (MKNNYTSLKS…GPTEIANPNV (71 aa)) is disordered. The segment covering 19 to 30 (KTDHEIDLEKGL) has biased composition (basic and acidic residues). Helical transmembrane passes span 84 to 106 (IYFLLRLLISVLAVSVVFFTAWV), 121 to 140 (FSVTIGITCPILFIAIFYFY), and 196 to 216 (SASAFTFMAVSSILIFIAETV).

The protein belongs to the WTF family. In terms of assembly, homomer. Interacts with other proteins that exhibit high sequence similarity.

The protein localises to the spore membrane. The protein resides in the vacuole membrane. Functionally, acts as a suppressor component of the dual wtf meiotic drive system, and can suppress but not confer meiotic drive by compatible poisons. Wtf meiotic drive systems promote unequal transmission of alleles from the parental zygote to progeny spores by encoding a poison and an antidote from the same locus; the poison is trans-acting and forms toxic aggregates in all spores within an ascus, wherease the antidote is spore-specific and targets aggregates for degradation by the vacuole. Meiotic drive by wtf systems therefore lead to poisoning of all progeny that do not inherit the dual poison/antidote allele, or express a compatible antidote. This Schizosaccharomyces pombe (strain 972 / ATCC 24843) (Fission yeast) protein is Meiotic drive suppressor wtf20.